The primary structure comprises 245 residues: 8-amino-3,8-dideoxy-manno-octulosonate cytidylyltransferase (245 aa).

This sequence belongs to the KdsB family.

The protein localises to the cytoplasm. It catalyses the reaction 8-amino-3,8-dideoxy-alpha-D-manno-octulosonate + CTP = CMP-8-amino-3,8-dideoxy-alpha-D-manno-oct-2-ulosonate + diphosphate. The protein operates within bacterial outer membrane biogenesis; lipopolysaccharide biosynthesis. Its function is as follows. Activates KDO8N (a required 8-carbon sugar) for incorporation into bacterial lipopolysaccharide in the Shewanella genus. The protein is 8-amino-3,8-dideoxy-manno-octulosonate cytidylyltransferase of Shewanella halifaxensis (strain HAW-EB4).